The primary structure comprises 107 residues: Lipid-anchored protein YDL012C (107 aa).

The segment covering 1-18 has biased composition (polar residues); that stretch reads MSAQDYYGNSASKQSYSR. The disordered stretch occupies residues 1–86; that stretch reads MSAQDYYGNS…VQQQPASSGN (86 aa). S2 carries the N-acetylserine modification. A Glycyl lysine isopeptide (Lys-Gly) (interchain with G-Cter in ubiquitin) cross-link involves residue K13. Positions 35 to 81 are enriched in low complexity; it reads PSQSQQNYYPPQQQQQQYQQQPQYYQQQQPQYYQQHPQQPIYVQQQP.

The protein belongs to the CYSTM1 family.

It is found in the cell membrane. This is Lipid-anchored protein YDL012C from Saccharomyces cerevisiae (strain ATCC 204508 / S288c) (Baker's yeast).